A 498-amino-acid chain; its full sequence is MRINPTTSGPAVSTLEEKNLGRIAQIIGPVLDVVFPPGKMPNIYNALVVKGRDTVGQQINVTCEVQQLLGNNRVRAVAMSATDGLTRGMEVIDTGAPLSVPVGGATLGRIFNVLGEPVDNLGPVDTRTTSPIHRSAPAFIQLDTKLSIFETGIKVVDLLAPYRRGGKIGLFGGAGVGKTVLIMELINNIAKAHGGVSVFGGVSERTREGNDLYMEMKESGVINEKNIAESKVALVYGQMNEPPGARMRVGLTALTMAEYFRDVNEQDVLLFIDNIFRFVQAGSEVSALLGRMPSAVGYQPTLSTEMGTLQERITSTKEGSITSIQAVYVPADDLTDPAPATTFAHLDATTVLSRGLAAKGIYPAVDPLDSTSTMLQPRIVGEEHYETAQRVKQTLQRYKELQDIIAILGLDELSEEDRLTVARARKIERFLSQPFFVAEVFTGSPGKYVGLAETIRGFQLILSGELDGLPEQAFYLVGNIDEATAKAMNLEGESNLKK.

172-179 (GGAGVGKT) contacts ATP.

Belongs to the ATPase alpha/beta chains family. As to quaternary structure, F-type ATPases have 2 components, CF(1) - the catalytic core - and CF(0) - the membrane proton channel. CF(1) has five subunits: alpha(3), beta(3), gamma(1), delta(1), epsilon(1). CF(0) has four main subunits: a(1), b(1), b'(1) and c(9-12).

It is found in the plastid. The protein localises to the chloroplast thylakoid membrane. It catalyses the reaction ATP + H2O + 4 H(+)(in) = ADP + phosphate + 5 H(+)(out). Produces ATP from ADP in the presence of a proton gradient across the membrane. The catalytic sites are hosted primarily by the beta subunits. This Agapanthus africanus (Lily of the Nile) protein is ATP synthase subunit beta, chloroplastic.